Reading from the N-terminus, the 356-residue chain is 11-beta-hydroxysteroid dehydrogenase (356 aa).

A helical; Signal-anchor for type II membrane protein membrane pass occupies residues 10-30 (LVVPPAGLLMLAFAWPSLAFF). A Proline-knob motif is present at residues 13 to 26 (PPAGLLMLAFAWPS). 54-85 (GASSGIGEQIAYQYAKRRANLVLVARREHRLR) lines the NADP(+) pocket. Ser-184 provides a ligand contact to substrate. The Proton acceptor role is filled by Tyr-197. NADP(+) is bound by residues 197-201 (YNAAK) and Lys-201.

It belongs to the short-chain dehydrogenases/reductases (SDR) family. Expressed in megagametophytes (at protein level).

It is found in the lipid droplet. The protein resides in the membrane. The enzyme catalyses an 11beta-hydroxysteroid + NADP(+) = an 11-oxosteroid + NADPH + H(+). It catalyses the reaction corticosterone + NADP(+) = 11-dehydrocorticosterone + NADPH + H(+). It carries out the reaction 17beta-estradiol + NADP(+) = estrone + NADPH + H(+). Its function is as follows. Has dehydrogenase activity against corticosterone (11 beta-hydroxysteroid) and estradiol (17 beta-hydroxysteroid) in the presence of NADP(+). May be involved in signal transduction regulated by various sterols. The protein is 11-beta-hydroxysteroid dehydrogenase of Pinus massoniana (Chinese red pine).